The chain runs to 261 residues: Caveolae-associated protein 3 (261 aa).

An interaction with CAVIN1 region spans residues Met-1 to Lys-84. The segment at Val-20–Leu-78 is leucine-zipper. Ser-62 and Ser-70 each carry phosphoserine. Lys-128 participates in a covalent cross-link: Glycyl lysine isopeptide (Lys-Gly) (interchain with G-Cter in SUMO2). Residues Ala-135 to Pro-203 form an interaction with CAV1 region. Residues Gln-139 to Ala-261 form a disordered region. Residues Leu-158–Pro-170 are compositionally biased toward acidic residues. Ser-165, Ser-166, and Ser-173 each carry phosphoserine. The span at Ala-200 to Leu-212 shows a compositional bias: pro residues. Over residues Gly-213 to Thr-231 the composition is skewed to low complexity.

Belongs to the CAVIN family. As to quaternary structure, component of the CAVIN complex composed of CAVIN1, CAVIN2, CAVIN3 and CAVIN4. Interacts with PRKCD and with phosphatidylserine. Phosphatidylserine may form a bridge between PKC and PKC-binding partners and stabilize the binding. Interacts with PER2. Interacts with CAVIN1. Interacts (via leucine-zipper domain) with CAV1 in a cholesterol-sensitive manner. Interacts with EPS15L1. In vitro, phosphorylated by PRKCD. As to expression, skeletal muscle, liver, stomach, lung, kidney and heart (at protein level). Strongly expressed in mammary and epithelial cells.

The protein resides in the cytoplasm. It localises to the membrane. The protein localises to the caveola. It is found in the cytosol. Its function is as follows. Regulates the traffic and/or budding of caveolae. Plays a role in caveola formation in a tissue-specific manner. Required for the formation of caveolae in smooth muscle but not in the lung and heart endothelial cells. Regulates the equilibrium between cell surface-associated and cell surface-dissociated caveolae by promoting the rapid release of caveolae from the cell surface. Plays a role in the regulation of the circadian clock. Modulates the period length and phase of circadian gene expression and also regulates expression and interaction of the core clock components PER1/2 and CRY1/2. In Homo sapiens (Human), this protein is Caveolae-associated protein 3.